Reading from the N-terminus, the 501-residue chain is Glycerol kinase (501 aa).

Residue Thr-11 coordinates ADP. The ATP site is built by Thr-11, Thr-12, and Ser-13. A sn-glycerol 3-phosphate-binding site is contributed by Thr-11. Arg-15 is a binding site for ADP. Sn-glycerol 3-phosphate-binding residues include Arg-81, Glu-82, Tyr-133, and Asp-242. Glycerol contacts are provided by Arg-81, Glu-82, Tyr-133, Asp-242, and Gln-243. Residues Thr-264 and Gly-307 each coordinate ADP. Positions 264, 307, 311, and 409 each coordinate ATP. Residues Gly-409 and Asn-413 each coordinate ADP.

Belongs to the FGGY kinase family.

It carries out the reaction glycerol + ATP = sn-glycerol 3-phosphate + ADP + H(+). It functions in the pathway polyol metabolism; glycerol degradation via glycerol kinase pathway; sn-glycerol 3-phosphate from glycerol: step 1/1. Inhibited by fructose 1,6-bisphosphate (FBP). Functionally, key enzyme in the regulation of glycerol uptake and metabolism. Catalyzes the phosphorylation of glycerol to yield sn-glycerol 3-phosphate. The polypeptide is Glycerol kinase (Borreliella burgdorferi (strain ATCC 35210 / DSM 4680 / CIP 102532 / B31) (Borrelia burgdorferi)).